The chain runs to 427 residues: 3-phosphoshikimate 1-carboxyvinyltransferase (427 aa).

Lys23, Ser24, and Arg28 together coordinate 3-phosphoshikimate. Lys23 is a binding site for phosphoenolpyruvate. Phosphoenolpyruvate is bound by residues Gly97 and Arg125. Residues Ser170, Ser171, Gln172, Ser198, Asp314, Asn337, and Lys341 each coordinate 3-phosphoshikimate. Gln172 serves as a coordination point for phosphoenolpyruvate. Residue Asp314 is the Proton acceptor of the active site. Phosphoenolpyruvate is bound by residues Arg345, Arg387, and Lys412.

This sequence belongs to the EPSP synthase family. In terms of assembly, monomer.

Its subcellular location is the cytoplasm. The catalysed reaction is 3-phosphoshikimate + phosphoenolpyruvate = 5-O-(1-carboxyvinyl)-3-phosphoshikimate + phosphate. It participates in metabolic intermediate biosynthesis; chorismate biosynthesis; chorismate from D-erythrose 4-phosphate and phosphoenolpyruvate: step 6/7. Its function is as follows. Catalyzes the transfer of the enolpyruvyl moiety of phosphoenolpyruvate (PEP) to the 5-hydroxyl of shikimate-3-phosphate (S3P) to produce enolpyruvyl shikimate-3-phosphate and inorganic phosphate. In Buchnera aphidicola subsp. Acyrthosiphon pisum (strain 5A), this protein is 3-phosphoshikimate 1-carboxyvinyltransferase.